The primary structure comprises 424 residues: ATP-sensitive inward rectifier potassium channel 8 (424 aa).

At 1–69 (MLARKSIIPE…IFTTLVDLKW (69 aa)) the chain is on the cytoplasmic side. The residue at position 6 (S6) is a Phosphoserine. Residues 70–94 (RHTLVIFTMSFLCSWLLFAIMWWLV) traverse the membrane as a helical segment. The Extracellular segment spans residues 95-126 (AFAHGDIYAYMEKSGMEKSGLESTVCVTNVRS). The segment at residues 127–138 (FTSAFLFSIEVQ) is an intramembrane region (helical; Pore-forming). Residues 139–145 (VTIGFGG) constitute an intramembrane region (pore-forming). The short motif at 140 to 145 (TIGFGG) is the Selectivity filter element. Topologically, residues 146–154 (RMMTEECPL) are extracellular. The chain crosses the membrane as a helical span at residues 155-176 (AITVLILQNIVGLIINAVMLGC). Over 177–424 (IFMKTAQAHR…PEGNQNTSES (248 aa)) the chain is Cytoplasmic. The segment at 375-424 (SHQNSLRKRNSMRRNNSMRRNNSIRRNNSSLMVPKVQFMTPEGNQNTSES) is disordered. Residues 387–404 (RRNNSMRRNNSIRRNNSS) are compositionally biased toward low complexity.

Belongs to the inward rectifier-type potassium channel (TC 1.A.2.1) family. KCNJ8 subfamily. As to quaternary structure, interacts with ABCC9. As to expression, predominantly detected in fetal and adult heart.

The protein resides in the membrane. The catalysed reaction is K(+)(in) = K(+)(out). Functionally, inward rectifier potassium channels are characterized by a greater tendency to allow potassium to flow into the cell rather than out of it. Their voltage dependence is regulated by the concentration of extracellular potassium; as external potassium is raised, the voltage range of the channel opening shifts to more positive voltages. The inward rectification is mainly due to the blockage of outward current by internal magnesium. This channel is activated by internal ATP and can be blocked by external barium. Can form a sulfonylurea-sensitive but ATP-insensitive potassium channel with ABCC9. The protein is ATP-sensitive inward rectifier potassium channel 8 (KCNJ8) of Homo sapiens (Human).